A 207-amino-acid polypeptide reads, in one-letter code: Probable molybdenum cofactor guanylyltransferase (207 aa).

GTP-binding positions include 9–11, lysine 21, and aspartate 97; that span reads LAG. Aspartate 97 serves as a coordination point for Mg(2+).

The protein belongs to the MobA family. Mg(2+) is required as a cofactor.

Its subcellular location is the cytoplasm. The enzyme catalyses Mo-molybdopterin + GTP + H(+) = Mo-molybdopterin guanine dinucleotide + diphosphate. Transfers a GMP moiety from GTP to Mo-molybdopterin (Mo-MPT) cofactor (Moco or molybdenum cofactor) to form Mo-molybdopterin guanine dinucleotide (Mo-MGD) cofactor. This is Probable molybdenum cofactor guanylyltransferase from Nostoc sp. (strain PCC 7120 / SAG 25.82 / UTEX 2576).